A 153-amino-acid chain; its full sequence is Small ribosomal subunit protein bS16 (153 aa).

The disordered stretch occupies residues 114-153; the sequence is ENEPVGEAITPKKKKAKAEDAEAAADAPAEAAAESEAADK. Residues 137–153 are compositionally biased toward low complexity; it reads AADAPAEAAAESEAADK.

It belongs to the bacterial ribosomal protein bS16 family.

This is Small ribosomal subunit protein bS16 from Rhodococcus jostii (strain RHA1).